A 216-amino-acid polypeptide reads, in one-letter code: Pyridoxine/pyridoxamine 5'-phosphate oxidase (216 aa).

Substrate is bound by residues 12 to 15 (RREY) and Lys70. FMN contacts are provided by residues 65–70 (RLVLLK), 80–81 (YT), Arg86, Lys87, and Gln109. The substrate site is built by Tyr127, Arg131, and Ser135. FMN contacts are provided by residues 144-145 (QS) and Trp189. 195-197 (RMH) is a substrate binding site. FMN is bound at residue Arg199.

It belongs to the pyridoxamine 5'-phosphate oxidase family. As to quaternary structure, homodimer. Requires FMN as cofactor.

The catalysed reaction is pyridoxamine 5'-phosphate + O2 + H2O = pyridoxal 5'-phosphate + H2O2 + NH4(+). It catalyses the reaction pyridoxine 5'-phosphate + O2 = pyridoxal 5'-phosphate + H2O2. It participates in cofactor metabolism; pyridoxal 5'-phosphate salvage; pyridoxal 5'-phosphate from pyridoxamine 5'-phosphate: step 1/1. The protein operates within cofactor metabolism; pyridoxal 5'-phosphate salvage; pyridoxal 5'-phosphate from pyridoxine 5'-phosphate: step 1/1. In terms of biological role, catalyzes the oxidation of either pyridoxine 5'-phosphate (PNP) or pyridoxamine 5'-phosphate (PMP) into pyridoxal 5'-phosphate (PLP). The chain is Pyridoxine/pyridoxamine 5'-phosphate oxidase from Sodalis glossinidius (strain morsitans).